The sequence spans 300 residues: Ribosomal RNA small subunit methyltransferase H (300 aa).

Residues 46–48 (GGH), aspartate 65, phenylalanine 92, aspartate 107, and glutamine 114 each bind S-adenosyl-L-methionine.

This sequence belongs to the methyltransferase superfamily. RsmH family.

It localises to the cytoplasm. The enzyme catalyses cytidine(1402) in 16S rRNA + S-adenosyl-L-methionine = N(4)-methylcytidine(1402) in 16S rRNA + S-adenosyl-L-homocysteine + H(+). In terms of biological role, specifically methylates the N4 position of cytidine in position 1402 (C1402) of 16S rRNA. This Prochlorococcus marinus (strain MIT 9301) protein is Ribosomal RNA small subunit methyltransferase H.